Reading from the N-terminus, the 148-residue chain is Transcription antitermination protein NusB (148 aa).

This sequence belongs to the NusB family.

Functionally, involved in transcription antitermination. Required for transcription of ribosomal RNA (rRNA) genes. Binds specifically to the boxA antiterminator sequence of the ribosomal RNA (rrn) operons. This Aquifex aeolicus (strain VF5) protein is Transcription antitermination protein NusB.